Consider the following 154-residue polypeptide: Deoxyuridine 5'-triphosphate nucleotidohydrolase (154 aa).

Residues 64 to 66 (RSG), N77, 81 to 83 (TID), and K91 contribute to the substrate site.

This sequence belongs to the dUTPase family. In terms of assembly, homotrimer. It depends on Mg(2+) as a cofactor.

It carries out the reaction dUTP + H2O = dUMP + diphosphate + H(+). It participates in pyrimidine metabolism; dUMP biosynthesis; dUMP from dCTP (dUTP route): step 2/2. This enzyme is involved in nucleotide metabolism: it produces dUMP, the immediate precursor of thymidine nucleotides and it decreases the intracellular concentration of dUTP so that uracil cannot be incorporated into DNA. This chain is Deoxyuridine 5'-triphosphate nucleotidohydrolase, found in Mycobacterium avium (strain 104).